The sequence spans 418 residues: Gamma-glutamyl phosphate reductase (418 aa).

Belongs to the gamma-glutamyl phosphate reductase family.

It localises to the cytoplasm. The catalysed reaction is L-glutamate 5-semialdehyde + phosphate + NADP(+) = L-glutamyl 5-phosphate + NADPH + H(+). It participates in amino-acid biosynthesis; L-proline biosynthesis; L-glutamate 5-semialdehyde from L-glutamate: step 2/2. Its function is as follows. Catalyzes the NADPH-dependent reduction of L-glutamate 5-phosphate into L-glutamate 5-semialdehyde and phosphate. The product spontaneously undergoes cyclization to form 1-pyrroline-5-carboxylate. The polypeptide is Gamma-glutamyl phosphate reductase (Thermodesulfovibrio yellowstonii (strain ATCC 51303 / DSM 11347 / YP87)).